The following is a 455-amino-acid chain: Acid sphingomyelinase-like phosphodiesterase 3b (455 aa).

A signal peptide spans 1–18; it reads MRLLAWLIFLANWGGARA. The Zn(2+) site is built by Asp28 and His30. Cys45 and Cys64 are joined by a disulfide. Residue Asn72 is glycosylated (N-linked (GlcNAc...) asparagine). 2 residues coordinate Zn(2+): Asp93 and Asn134. An N-linked (GlcNAc...) asparagine glycan is attached at Asn164. Residues His236, His277, and His279 each contribute to the Zn(2+) site. A glycan (N-linked (GlcNAc...) asparagine) is linked at Asn343. 2 disulfides stabilise this stretch: Cys405-Cys409 and Cys415-Cys428.

The protein belongs to the acid sphingomyelinase family. Interacts with TLR4, TLR7, TLR8 and TLR9. It depends on Zn(2+) as a cofactor. Post-translationally, N-glycosylated.

The protein resides in the secreted. It localises to the cell membrane. In terms of biological role, lipid-modulating phosphodiesterase. Active on the surface of macrophages and dendritic cells and strongly influences macrophage lipid composition and membrane fluidity. Acts as a negative regulator of Toll-like receptor signaling. Has in vitro phosphodiesterase activity, but the physiological substrate is unknown. Lacks activity with phosphocholine-containing lipids, but can cleave CDP-choline, and can release phosphate from ATP and ADP (in vitro). This Homo sapiens (Human) protein is Acid sphingomyelinase-like phosphodiesterase 3b (SMPDL3B).